A 353-amino-acid chain; its full sequence is Holliday junction branch migration complex subunit RuvB (353 aa).

A large ATPase domain (RuvB-L) region spans residues 4–190; that stretch reads TDKLQAPRVI…FGIVARLEFY (187 aa). Residues L29, R30, G71, K74, T75, T76, 137–139, R180, Y190, and R227 contribute to the ATP site; that span reads EDF. T75 lines the Mg(2+) pocket. A small ATPAse domain (RuvB-S) region spans residues 191–261; sequence TPHELAYIVG…VADAALLMLD (71 aa). Residues 264–353 form a head domain (RuvB-H) region; the sequence is HLGLDLMDRK…DESAELFSAP (90 aa). The DNA site is built by R319 and R324.

The protein belongs to the RuvB family. Homohexamer. Forms an RuvA(8)-RuvB(12)-Holliday junction (HJ) complex. HJ DNA is sandwiched between 2 RuvA tetramers; dsDNA enters through RuvA and exits via RuvB. An RuvB hexamer assembles on each DNA strand where it exits the tetramer. Each RuvB hexamer is contacted by two RuvA subunits (via domain III) on 2 adjacent RuvB subunits; this complex drives branch migration. In the full resolvosome a probable DNA-RuvA(4)-RuvB(12)-RuvC(2) complex forms which resolves the HJ.

Its subcellular location is the cytoplasm. It catalyses the reaction ATP + H2O = ADP + phosphate + H(+). Its function is as follows. The RuvA-RuvB-RuvC complex processes Holliday junction (HJ) DNA during genetic recombination and DNA repair, while the RuvA-RuvB complex plays an important role in the rescue of blocked DNA replication forks via replication fork reversal (RFR). RuvA specifically binds to HJ cruciform DNA, conferring on it an open structure. The RuvB hexamer acts as an ATP-dependent pump, pulling dsDNA into and through the RuvAB complex. RuvB forms 2 homohexamers on either side of HJ DNA bound by 1 or 2 RuvA tetramers; 4 subunits per hexamer contact DNA at a time. Coordinated motions by a converter formed by DNA-disengaged RuvB subunits stimulates ATP hydrolysis and nucleotide exchange. Immobilization of the converter enables RuvB to convert the ATP-contained energy into a lever motion, pulling 2 nucleotides of DNA out of the RuvA tetramer per ATP hydrolyzed, thus driving DNA branch migration. The RuvB motors rotate together with the DNA substrate, which together with the progressing nucleotide cycle form the mechanistic basis for DNA recombination by continuous HJ branch migration. Branch migration allows RuvC to scan DNA until it finds its consensus sequence, where it cleaves and resolves cruciform DNA. This is Holliday junction branch migration complex subunit RuvB from Aromatoleum aromaticum (strain DSM 19018 / LMG 30748 / EbN1) (Azoarcus sp. (strain EbN1)).